Consider the following 528-residue polypeptide: ATP synthase subunit alpha 1 (528 aa).

Gly169–Thr176 serves as a coordination point for ATP.

It belongs to the ATPase alpha/beta chains family. F-type ATPases have 2 components, CF(1) - the catalytic core - and CF(0) - the membrane proton channel. CF(1) has five subunits: alpha(3), beta(3), gamma(1), delta(1), epsilon(1). CF(0) has three main subunits: a(1), b(2) and c(9-12). The alpha and beta chains form an alternating ring which encloses part of the gamma chain. CF(1) is attached to CF(0) by a central stalk formed by the gamma and epsilon chains, while a peripheral stalk is formed by the delta and b chains.

Its subcellular location is the cell membrane. The enzyme catalyses ATP + H2O + 4 H(+)(in) = ADP + phosphate + 5 H(+)(out). Functionally, produces ATP from ADP in the presence of a proton gradient across the membrane. The alpha chain is a regulatory subunit. The protein is ATP synthase subunit alpha 1 of Mycoplasmopsis pulmonis (strain UAB CTIP) (Mycoplasma pulmonis).